The sequence spans 184 residues: Adenine phosphoribosyltransferase (184 aa).

The protein belongs to the purine/pyrimidine phosphoribosyltransferase family. As to quaternary structure, homodimer.

The protein localises to the cytoplasm. The catalysed reaction is AMP + diphosphate = 5-phospho-alpha-D-ribose 1-diphosphate + adenine. The protein operates within purine metabolism; AMP biosynthesis via salvage pathway; AMP from adenine: step 1/1. Its function is as follows. Catalyzes a salvage reaction resulting in the formation of AMP, that is energically less costly than de novo synthesis. This Sphingopyxis alaskensis (strain DSM 13593 / LMG 18877 / RB2256) (Sphingomonas alaskensis) protein is Adenine phosphoribosyltransferase.